We begin with the raw amino-acid sequence, 557 residues long: Dihydroxy-acid dehydratase (557 aa).

A Mg(2+)-binding site is contributed by aspartate 78. Cysteine 119 provides a ligand contact to [2Fe-2S] cluster. Positions 120 and 121 each coordinate Mg(2+). N6-carboxylysine is present on lysine 121. Cysteine 192 contacts [2Fe-2S] cluster. Residue glutamate 442 coordinates Mg(2+). Serine 468 (proton acceptor) is an active-site residue.

The protein belongs to the IlvD/Edd family. In terms of assembly, homodimer. The cofactor is [2Fe-2S] cluster. Mg(2+) is required as a cofactor.

It carries out the reaction (2R)-2,3-dihydroxy-3-methylbutanoate = 3-methyl-2-oxobutanoate + H2O. The catalysed reaction is (2R,3R)-2,3-dihydroxy-3-methylpentanoate = (S)-3-methyl-2-oxopentanoate + H2O. Its pathway is amino-acid biosynthesis; L-isoleucine biosynthesis; L-isoleucine from 2-oxobutanoate: step 3/4. It participates in amino-acid biosynthesis; L-valine biosynthesis; L-valine from pyruvate: step 3/4. In terms of biological role, functions in the biosynthesis of branched-chain amino acids. Catalyzes the dehydration of (2R,3R)-2,3-dihydroxy-3-methylpentanoate (2,3-dihydroxy-3-methylvalerate) into 2-oxo-3-methylpentanoate (2-oxo-3-methylvalerate) and of (2R)-2,3-dihydroxy-3-methylbutanoate (2,3-dihydroxyisovalerate) into 2-oxo-3-methylbutanoate (2-oxoisovalerate), the penultimate precursor to L-isoleucine and L-valine, respectively. The sequence is that of Dihydroxy-acid dehydratase from Bacillus cereus (strain AH187).